Here is a 2004-residue protein sequence, read N- to C-terminus: Histone acetyltransferase KAT6A (2004 aa).

The SAMD1-like winged helix (WH) domain occupies 1-77 (MVKLANPLYT…LNSYKDPDNP (77 aa)). The tract at residues 1–144 (MVKLANPLYT…FGGSAASGFH (144 aa)) is required for activation of RUNX1-1. Residues 52–166 (ELSVKDGTIL…HGRLLKDGPL (115 aa)) are required for nuclear localization. Residues 95-171 (QNVDWNKLIK…KDGPLYRLNT (77 aa)) form the H15 domain. Residues 144–664 (HQQLRLAIKR…RKGYGRFLID (521 aa)) are interaction with PML. N6-acetyllysine is present on Lys172. 2 PHD-type zinc fingers span residues 206–265 (IPIC…CKTC) and 259–313 (CIEC…CRPR). The tract at residues 312 to 664 (PRKKGRKLLQ…RKGYGRFLID (353 aa)) is interaction with RUNX1-1. A disordered region spans residues 334–375 (PIGRPKNRLKKQNTVSKGPFSKVRTGPGRGRKRKITLSSQSA). Residues Lys350 and Lys355 each carry the N6-acetyllysine modification. Thr369 carries the post-translational modification Phosphothreonine; by PKB/AKT1. The residue at position 420 (Ser420) is a Phosphoserine. The interval 441–464 (KRGNRKSSTSDWPTDNQDGWDGKQ) is disordered. The span at 446–457 (KSSTSDWPTDNQ) shows a compositional bias: polar residues. Ser473 is subject to Phosphoserine. Residues 488–778 (IQEQALQKVG…VDPECLRWTP (291 aa)) form a catalytic region. The MYST-type HAT domain maps to 504 to 778 (PQVRCPSVIE…VDPECLRWTP (275 aa)). Residues 507-810 (RCPSVIEFGK…EPQCQERELE (304 aa)) form a mediates interaction with BRPF1, required for histone H3 acetyltransferase activity region. The C2HC MYST-type zinc finger occupies 537-562 (LYLCEFCLKYMKSRTILQQHMKKCGW). Lys604 carries the N6-acetyllysine; by autocatalysis modification. Acetyl-CoA-binding positions include 645 to 649 (SCIMI) and 654 to 660 (QRKGYGR). Glu680 serves as the catalytic Proton donor/acceptor. Position 684 (Ser684) interacts with acetyl-CoA. Disordered regions lie at residues 785 to 1445 (VVSE…AYQD), 1461 to 1621 (QADE…MMQQ), and 1637 to 1721 (SCVV…MEIP). Residues Ser787 and Ser812 each carry the phosphoserine modification. A compositionally biased stretch (acidic residues) spans 787 to 803 (SEEEEEEAEEGENEEPQ). An N6-acetyllysine modification is found at Lys815. Over residues 817–836 (VSHENKEQDSYSVESEKKPE) the composition is skewed to basic and acidic residues. Lys834 is covalently cross-linked (Glycyl lysine isopeptide (Lys-Gly) (interchain with G-Cter in SUMO2)). Over residues 864-873 (RRGRWGRKNR) the composition is skewed to basic residues. The segment covering 874–888 (KTQERFGDKDSKLLL) has biased composition (basic and acidic residues). Tyr899 is subject to Phosphotyrosine. Basic and acidic residues-rich tracts occupy residues 931–942 (GKPDLPKRRLSE) and 953–980 (KSPE…DRAV). Phosphoserine is present on residues Ser941, Ser954, and Ser974. Lys1007 bears the N6-acetyllysine mark. Over residues 1009 to 1030 (TLKRKKPFLHRRRRVRKRKHHN) the composition is skewed to basic residues. Positions 1031-1042 (SSVVTETISETT) are enriched in low complexity. Acidic residues-rich tracts occupy residues 1043–1053 (EVLDEPFEDSD) and 1065–1078 (FEID…DENE). Phosphoserine occurs at positions 1089, 1090, and 1113. Residues 1107 to 1118 (EEEDEESDDADD) show a composition bias toward acidic residues. Basic residues predominate over residues 1146–1172 (LKKKKGWPKGKSRKPIHWKKRPGRKPG). The segment covering 1203–1223 (KIQESEETVEPKEDMPLPEER) has biased composition (basic and acidic residues). Over residues 1224-1245 (KEEEEMQAEAEEAEEGEEEDAA) the composition is skewed to acidic residues. The segment covering 1246–1262 (SSEVPAASPADSSNSPE) has biased composition (low complexity). Residues 1275 to 1287 (EKPRVSEEQRQSE) are compositionally biased toward basic and acidic residues. Acidic residues predominate over residues 1288–1305 (EEQQELEEPEPEEEEDAA). 3 stretches are compositionally biased toward basic and acidic residues: residues 1323 to 1345 (HLES…KEEP), 1358 to 1367 (KSREKIKDKE), and 1398 to 1420 (EDSH…HSEL). Residue Lys1342 forms a Glycyl lysine isopeptide (Lys-Gly) (interchain with G-Cter in SUMO2) linkage. Residues 1481-1503 (SPISSVQSHPSQSVRSVSSPNVP) are compositionally biased toward low complexity. Residues 1508-1529 (GYTQISPEQGSLSAPSMQNMET) are compositionally biased toward polar residues. The interaction with RUNX1-2 stretch occupies residues 1517–1642 (GSLSAPSMQN…KSPQSCVVER (126 aa)). The interaction with PML stretch occupies residues 1517-1741 (GSLSAPSMQN…YERIPGDFGA (225 aa)). Low complexity predominate over residues 1534 to 1548 (DVPSVSDHSQQVVDS). Polar residues predominate over residues 1556–1573 (IESTTENYENPSSYDSTM). A compositionally biased stretch (low complexity) spans 1574 to 1621 (GGSICGNSSSQSSCSYGGLSSSSSLTQSSCVVTQQMASMGSSCSMMQQ). Over residues 1650–1699 (QPPPPPPQQPQPPPPQPQPAPQPPPPQQQPQQQPQPQPQQPPPPPPPQQQ) the composition is skewed to pro residues. Over residues 1702 to 1712 (LSQCSMNNSFT) the composition is skewed to polar residues. Residues 1913-1948 (SMNMNTLNAMNSYRMTQPMMNSSYHSNPAYMNQTAQ) are required for activation of RUNX1-2.

This sequence belongs to the MYST (SAS/MOZ) family. Component of the MOZ/MORF complex composed at least of ING5, KAT6A, KAT6B, MEAF6 and one of BRPF1, BRD1/BRPF2 and BRPF3. Interacts with RUNX1; phosphorylation of RUNX1 enhances the interaction. Interacts with RUNX2. Interacts with p53/TP53. Interacts with PML (isoform PML-4) and this interaction positively regulates its acetylation activity towards p53/TP53. Post-translationally, autoacetylation at Lys-604 is required for proper function. Autoacetylated. Phosphorylation at Thr-369 by PKB/AKT1 inhibits its interaction with PML and negatively regulates its acetylation activity towards p53/TP53.

It localises to the nucleus. The protein localises to the nucleolus. Its subcellular location is the nucleoplasm. The protein resides in the PML body. It carries out the reaction L-lysyl-[protein] + acetyl-CoA = N(6)-acetyl-L-lysyl-[protein] + CoA + H(+). Its function is as follows. Histone acetyltransferase that acetylates lysine residues in histone H3 and histone H4 (in vitro). Component of the MOZ/MORF complex which has a histone H3 acetyltransferase activity. May act as a transcriptional coactivator for RUNX1 and RUNX2. Acetylates p53/TP53 at 'Lys-120' and 'Lys-382' and controls its transcriptional activity via association with PML. In Homo sapiens (Human), this protein is Histone acetyltransferase KAT6A (KAT6A).